The primary structure comprises 1556 residues: Disco-interacting protein 2 homolog C (1556 aa).

One can recognise a DMAP1-binding domain in the interval 7–120; that stretch reads EGMALPLEVR…PMPSKRRSLV (114 aa). 2 disordered regions span residues 47–157 and 170–189; these read YLPQ…SQGS and GSTT…SGAA. A compositionally biased stretch (basic and acidic residues) spans 81 to 93; that stretch reads GSRDERYRSDVHT. Composition is skewed to polar residues over residues 120–136 and 144–157; these read VVQT…TSSG and QGDS…SQGS. Over residues 170–183 the composition is skewed to low complexity; that stretch reads GSTTSTTSSSSTQS. At T264 the chain carries Phosphothreonine.

Belongs to the DIP2 family.

The chain is Disco-interacting protein 2 homolog C (DIP2C) from Homo sapiens (Human).